We begin with the raw amino-acid sequence, 511 residues long: Maturase K (511 aa).

The protein belongs to the intron maturase 2 family. MatK subfamily.

Its subcellular location is the plastid. The protein resides in the chloroplast. Usually encoded in the trnK tRNA gene intron. Probably assists in splicing its own and other chloroplast group II introns. In Nandina domestica (Heavenly bamboo), this protein is Maturase K.